The primary structure comprises 884 residues: Alanine--tRNA ligase (884 aa).

His-570, His-574, Cys-676, and His-680 together coordinate Zn(2+).

Belongs to the class-II aminoacyl-tRNA synthetase family. Requires Zn(2+) as cofactor.

The protein resides in the cytoplasm. It carries out the reaction tRNA(Ala) + L-alanine + ATP = L-alanyl-tRNA(Ala) + AMP + diphosphate. Catalyzes the attachment of alanine to tRNA(Ala) in a two-step reaction: alanine is first activated by ATP to form Ala-AMP and then transferred to the acceptor end of tRNA(Ala). Also edits incorrectly charged Ser-tRNA(Ala) and Gly-tRNA(Ala) via its editing domain. The sequence is that of Alanine--tRNA ligase from Lawsonia intracellularis (strain PHE/MN1-00).